The following is a 479-amino-acid chain: Membrane-bound lytic murein transglycosylase F (479 aa).

A signal peptide spans 1–15 (MKRLLLVLCYITLLA). Positions 16-258 (GCQKVVVEQE…HLNEKYFAHV (243 aa)) are non-LT domain. An LT domain region spans residues 260 to 479 (RFDYVDTRAF…QTDAIQPQQP (220 aa)). E303 is an active-site residue. A disordered region spans residues 457-479 (LQTAEAKETEEKPQTDAIQPQQP). Residues 461 to 470 (EAKETEEKPQ) show a composition bias toward basic and acidic residues.

It in the N-terminal section; belongs to the bacterial solute-binding protein 3 family. The protein in the C-terminal section; belongs to the transglycosylase Slt family.

It is found in the cell outer membrane. The enzyme catalyses Exolytic cleavage of the (1-&gt;4)-beta-glycosidic linkage between N-acetylmuramic acid (MurNAc) and N-acetylglucosamine (GlcNAc) residues in peptidoglycan, from either the reducing or the non-reducing ends of the peptidoglycan chains, with concomitant formation of a 1,6-anhydrobond in the MurNAc residue.. Its function is as follows. Murein-degrading enzyme that degrades murein glycan strands and insoluble, high-molecular weight murein sacculi, with the concomitant formation of a 1,6-anhydromuramoyl product. Lytic transglycosylases (LTs) play an integral role in the metabolism of the peptidoglycan (PG) sacculus. Their lytic action creates space within the PG sacculus to allow for its expansion as well as for the insertion of various structures such as secretion systems and flagella. The sequence is that of Membrane-bound lytic murein transglycosylase F from Shewanella pealeana (strain ATCC 700345 / ANG-SQ1).